A 316-amino-acid chain; its full sequence is Thymidylate synthase (316 aa).

DUMP-binding positions include Arg-23 and 178-179 (RR). The active-site Nucleophile is the Cys-198. Residues 218–221 (RSAD), Asn-229, and 259–261 (HIY) contribute to the dUMP site. Asp-221 serves as a coordination point for (6R)-5,10-methylene-5,6,7,8-tetrahydrofolate. Ala-315 is a (6R)-5,10-methylene-5,6,7,8-tetrahydrofolate binding site.

The protein belongs to the thymidylate synthase family. Bacterial-type ThyA subfamily. As to quaternary structure, homodimer.

The protein localises to the cytoplasm. The catalysed reaction is dUMP + (6R)-5,10-methylene-5,6,7,8-tetrahydrofolate = 7,8-dihydrofolate + dTMP. It functions in the pathway pyrimidine metabolism; dTTP biosynthesis. Functionally, catalyzes the reductive methylation of 2'-deoxyuridine-5'-monophosphate (dUMP) to 2'-deoxythymidine-5'-monophosphate (dTMP) while utilizing 5,10-methylenetetrahydrofolate (mTHF) as the methyl donor and reductant in the reaction, yielding dihydrofolate (DHF) as a by-product. This enzymatic reaction provides an intracellular de novo source of dTMP, an essential precursor for DNA biosynthesis. This Levilactobacillus brevis (strain ATCC 367 / BCRC 12310 / CIP 105137 / JCM 1170 / LMG 11437 / NCIMB 947 / NCTC 947) (Lactobacillus brevis) protein is Thymidylate synthase.